Consider the following 155-residue polypeptide: Ribosomal RNA large subunit methyltransferase H (155 aa).

S-adenosyl-L-methionine contacts are provided by residues glycine 104 and leucine 123 to phenylalanine 128.

Belongs to the RNA methyltransferase RlmH family. As to quaternary structure, homodimer.

It is found in the cytoplasm. It carries out the reaction pseudouridine(1915) in 23S rRNA + S-adenosyl-L-methionine = N(3)-methylpseudouridine(1915) in 23S rRNA + S-adenosyl-L-homocysteine + H(+). Functionally, specifically methylates the pseudouridine at position 1915 (m3Psi1915) in 23S rRNA. This chain is Ribosomal RNA large subunit methyltransferase H, found in Oleidesulfovibrio alaskensis (strain ATCC BAA-1058 / DSM 17464 / G20) (Desulfovibrio alaskensis).